The following is a 199-amino-acid chain: dITP/XTP pyrophosphatase (199 aa).

8–13 (THNRNK) serves as a coordination point for substrate. Aspartate 68 functions as the Proton acceptor in the catalytic mechanism. Aspartate 68 serves as a coordination point for Mg(2+). Substrate-binding positions include serine 69, 151-154 (HGYD), lysine 174, and 179-180 (HR).

It belongs to the HAM1 NTPase family. In terms of assembly, homodimer. Requires Mg(2+) as cofactor.

It carries out the reaction XTP + H2O = XMP + diphosphate + H(+). The catalysed reaction is dITP + H2O = dIMP + diphosphate + H(+). The enzyme catalyses ITP + H2O = IMP + diphosphate + H(+). Pyrophosphatase that catalyzes the hydrolysis of nucleoside triphosphates to their monophosphate derivatives, with a high preference for the non-canonical purine nucleotides XTP (xanthosine triphosphate), dITP (deoxyinosine triphosphate) and ITP. Seems to function as a house-cleaning enzyme that removes non-canonical purine nucleotides from the nucleotide pool, thus preventing their incorporation into DNA/RNA and avoiding chromosomal lesions. This Leifsonia xyli subsp. xyli (strain CTCB07) protein is dITP/XTP pyrophosphatase.